We begin with the raw amino-acid sequence, 383 residues long: Carbamoyl phosphate synthase small chain (383 aa).

The interval 1 to 190 is CPSase; the sequence is MPHPSSRQAH…FDQRLKQHPD (190 aa). 3 residues coordinate L-glutamine: S51, G242, and G244. One can recognise a Glutamine amidotransferase type-1 domain in the interval 194 to 381; that stretch reads RVVAIDFGIK…VALMADRRDV (188 aa). C271 functions as the Nucleophile in the catalytic mechanism. L-glutamine contacts are provided by L272, Q275, N311, G313, and F314. Catalysis depends on residues H354 and E356.

It belongs to the CarA family. Composed of two chains; the small (or glutamine) chain promotes the hydrolysis of glutamine to ammonia, which is used by the large (or ammonia) chain to synthesize carbamoyl phosphate. Tetramer of heterodimers (alpha,beta)4.

The catalysed reaction is hydrogencarbonate + L-glutamine + 2 ATP + H2O = carbamoyl phosphate + L-glutamate + 2 ADP + phosphate + 2 H(+). It catalyses the reaction L-glutamine + H2O = L-glutamate + NH4(+). It participates in amino-acid biosynthesis; L-arginine biosynthesis; carbamoyl phosphate from bicarbonate: step 1/1. It functions in the pathway pyrimidine metabolism; UMP biosynthesis via de novo pathway; (S)-dihydroorotate from bicarbonate: step 1/3. Its function is as follows. Small subunit of the glutamine-dependent carbamoyl phosphate synthetase (CPSase). CPSase catalyzes the formation of carbamoyl phosphate from the ammonia moiety of glutamine, carbonate, and phosphate donated by ATP, constituting the first step of 2 biosynthetic pathways, one leading to arginine and/or urea and the other to pyrimidine nucleotides. The small subunit (glutamine amidotransferase) binds and cleaves glutamine to supply the large subunit with the substrate ammonia. In Parasynechococcus marenigrum (strain WH8102), this protein is Carbamoyl phosphate synthase small chain.